We begin with the raw amino-acid sequence, 336 residues long: Aspartate carbamoyltransferase catalytic subunit (336 aa).

Carbamoyl phosphate contacts are provided by Arg72 and Thr73. Lys100 provides a ligand contact to L-aspartate. Arg122, His152, and Gln155 together coordinate carbamoyl phosphate. L-aspartate is bound by residues Arg185 and Arg240. Gly281 and Pro282 together coordinate carbamoyl phosphate.

This sequence belongs to the aspartate/ornithine carbamoyltransferase superfamily. ATCase family. As to quaternary structure, heterododecamer (2C3:3R2) of six catalytic PyrB chains organized as two trimers (C3), and six regulatory PyrI chains organized as three dimers (R2).

The catalysed reaction is carbamoyl phosphate + L-aspartate = N-carbamoyl-L-aspartate + phosphate + H(+). Its pathway is pyrimidine metabolism; UMP biosynthesis via de novo pathway; (S)-dihydroorotate from bicarbonate: step 2/3. Functionally, catalyzes the condensation of carbamoyl phosphate and aspartate to form carbamoyl aspartate and inorganic phosphate, the committed step in the de novo pyrimidine nucleotide biosynthesis pathway. The sequence is that of Aspartate carbamoyltransferase catalytic subunit from Marinobacter nauticus (strain ATCC 700491 / DSM 11845 / VT8) (Marinobacter aquaeolei).